Reading from the N-terminus, the 171-residue chain is Ribosome maturation factor RimM (171 aa).

The 73-residue stretch at 97–169 (DGEFYYHEII…RVDVDIMEGL (73 aa)) folds into the PRC barrel domain.

It belongs to the RimM family. As to quaternary structure, binds ribosomal protein uS19.

The protein localises to the cytoplasm. Its function is as follows. An accessory protein needed during the final step in the assembly of 30S ribosomal subunit, possibly for assembly of the head region. Essential for efficient processing of 16S rRNA. May be needed both before and after RbfA during the maturation of 16S rRNA. It has affinity for free ribosomal 30S subunits but not for 70S ribosomes. The polypeptide is Ribosome maturation factor RimM (Lactococcus lactis subsp. cremoris (strain SK11)).